Reading from the N-terminus, the 370-residue chain is Dual-specificity RNA methyltransferase RlmN (370 aa).

Glu-97 functions as the Proton acceptor in the catalytic mechanism. Residues Glu-103–Asp-340 enclose the Radical SAM core domain. Residues Cys-110 and Cys-345 are joined by a disulfide bond. Positions 117, 121, and 124 each coordinate [4Fe-4S] cluster. S-adenosyl-L-methionine contacts are provided by residues Gly-170–Glu-171, Ser-202, Ser-224–His-226, and Asn-302. Residue Cys-345 is the S-methylcysteine intermediate of the active site.

The protein belongs to the radical SAM superfamily. RlmN family. [4Fe-4S] cluster serves as cofactor.

It is found in the cytoplasm. It catalyses the reaction adenosine(2503) in 23S rRNA + 2 reduced [2Fe-2S]-[ferredoxin] + 2 S-adenosyl-L-methionine = 2-methyladenosine(2503) in 23S rRNA + 5'-deoxyadenosine + L-methionine + 2 oxidized [2Fe-2S]-[ferredoxin] + S-adenosyl-L-homocysteine. The catalysed reaction is adenosine(37) in tRNA + 2 reduced [2Fe-2S]-[ferredoxin] + 2 S-adenosyl-L-methionine = 2-methyladenosine(37) in tRNA + 5'-deoxyadenosine + L-methionine + 2 oxidized [2Fe-2S]-[ferredoxin] + S-adenosyl-L-homocysteine. Its function is as follows. Specifically methylates position 2 of adenine 2503 in 23S rRNA and position 2 of adenine 37 in tRNAs. m2A2503 modification seems to play a crucial role in the proofreading step occurring at the peptidyl transferase center and thus would serve to optimize ribosomal fidelity. The chain is Dual-specificity RNA methyltransferase RlmN from Hydrogenovibrio crunogenus (strain DSM 25203 / XCL-2) (Thiomicrospira crunogena).